We begin with the raw amino-acid sequence, 148 residues long: FAD synthase (148 aa).

ATP-binding positions include 5–6, 10–13, Asp92, and Tyr119; these read TF and HPGH.

The protein belongs to the archaeal FAD synthase family. In terms of assembly, homodimer. A divalent metal cation is required as a cofactor.

The enzyme catalyses FMN + ATP + H(+) = FAD + diphosphate. It functions in the pathway cofactor biosynthesis; FAD biosynthesis; FAD from FMN: step 1/1. In terms of biological role, catalyzes the transfer of the AMP portion of ATP to flavin mononucleotide (FMN) to produce flavin adenine dinucleotide (FAD) coenzyme. The protein is FAD synthase of Methanosphaera stadtmanae (strain ATCC 43021 / DSM 3091 / JCM 11832 / MCB-3).